The chain runs to 377 residues: N-acetyldiaminopimelate deacetylase (377 aa).

The active site involves Asp69. Catalysis depends on Glu128, which acts as the Proton acceptor.

It belongs to the peptidase M20A family. N-acetyldiaminopimelate deacetylase subfamily.

The catalysed reaction is N-acetyl-(2S,6S)-2,6-diaminopimelate + H2O = (2S,6S)-2,6-diaminopimelate + acetate. It participates in amino-acid biosynthesis; L-lysine biosynthesis via DAP pathway; LL-2,6-diaminopimelate from (S)-tetrahydrodipicolinate (acetylase route): step 3/3. In terms of biological role, catalyzes the conversion of N-acetyl-diaminopimelate to diaminopimelate and acetate. This is N-acetyldiaminopimelate deacetylase from Streptococcus sanguinis (strain SK36).